The following is a 142-amino-acid chain: Large ribosomal subunit protein uL13 (142 aa).

The protein belongs to the universal ribosomal protein uL13 family. Part of the 50S ribosomal subunit.

Functionally, this protein is one of the early assembly proteins of the 50S ribosomal subunit, although it is not seen to bind rRNA by itself. It is important during the early stages of 50S assembly. The protein is Large ribosomal subunit protein uL13 of Dechloromonas aromatica (strain RCB).